The primary structure comprises 404 residues: MKLPIYLDYSATTPVDPRVAQKMSECLLVDGNFGNPASRSHVFGWKAEESVENARRQVADLVNADPREIVWTSGATESDNLAIKGAAHFYASKGKHLITSKIEHKAVLDTMRQLEREGFEVTYLDPTEDGLITPAMIEAALREDTILVSVMHVNNEIGTVNDIAAIGELLRSKGILFHVDAAQSTGKVEIDLQKLKVDMMSFSAHKTYGPKGIGALYVSRKPRVRIEATMHGGGHERGMRSGTLATHQIVGMGEAFRVAKEDMAAENVRIKALSDRFYKQVEHLEELYVNGSLTARVPHNLNLSFNYVEGESLIMALKDLAVSSGSACTSASLEPSYVLRALGRNDELAHSSIRFTFGRFTTEEEIDYAAQKVCEAVTKLRALSPLWDMYKDGVDISKIEWAAH.

Pyridoxal 5'-phosphate contacts are provided by residues 75 to 76, Asn155, Gln183, and 203 to 205; these read AT and SAH. Lys206 is modified (N6-(pyridoxal phosphate)lysine). Thr243 provides a ligand contact to pyridoxal 5'-phosphate. The Cysteine persulfide intermediate role is filled by Cys328. Cys328 lines the [2Fe-2S] cluster pocket.

This sequence belongs to the class-V pyridoxal-phosphate-dependent aminotransferase family. NifS/IscS subfamily. In terms of assembly, homodimer. Forms a heterotetramer with IscU, interacts with other sulfur acceptors. It depends on pyridoxal 5'-phosphate as a cofactor.

The protein resides in the cytoplasm. It catalyses the reaction (sulfur carrier)-H + L-cysteine = (sulfur carrier)-SH + L-alanine. The protein operates within cofactor biosynthesis; iron-sulfur cluster biosynthesis. In terms of biological role, master enzyme that delivers sulfur to a number of partners involved in Fe-S cluster assembly, tRNA modification or cofactor biosynthesis. Catalyzes the removal of elemental sulfur atoms from cysteine to produce alanine. Functions as a sulfur delivery protein for Fe-S cluster synthesis onto IscU, an Fe-S scaffold assembly protein, as well as other S acceptor proteins. This chain is Cysteine desulfurase IscS, found in Pseudomonas fluorescens (strain Pf0-1).